We begin with the raw amino-acid sequence, 800 residues long: Phenylalanine--tRNA ligase beta subunit (800 aa).

Residues 39 to 154 (TKDIKNLVVG…ESQVPGTDAL (116 aa)) enclose the tRNA-binding domain. The B5 domain maps to 408–483 (AFITPIDITA…RIYGYDDIPS (76 aa)). Mg(2+)-binding residues include Asp-461, Asp-467, Glu-470, and Glu-471. The 93-residue stretch at 708–800 (PRFPGMSRDI…ALIEQGAVIR (93 aa)) folds into the FDX-ACB domain.

Belongs to the phenylalanyl-tRNA synthetase beta subunit family. Type 1 subfamily. As to quaternary structure, tetramer of two alpha and two beta subunits. It depends on Mg(2+) as a cofactor.

Its subcellular location is the cytoplasm. The catalysed reaction is tRNA(Phe) + L-phenylalanine + ATP = L-phenylalanyl-tRNA(Phe) + AMP + diphosphate + H(+). In Staphylococcus aureus, this protein is Phenylalanine--tRNA ligase beta subunit.